Here is a 371-residue protein sequence, read N- to C-terminus: Pyruvate dehydrogenase E1 component subunit alpha (371 aa).

Heterodimer of an alpha and a beta chain. Thiamine diphosphate serves as cofactor.

The enzyme catalyses N(6)-[(R)-lipoyl]-L-lysyl-[protein] + pyruvate + H(+) = N(6)-[(R)-S(8)-acetyldihydrolipoyl]-L-lysyl-[protein] + CO2. With respect to regulation, activity of the E1 module is inhibited by the pyruvate dehydrogenase inhibitor PdhI. In terms of biological role, the pyruvate dehydrogenase complex catalyzes the overall conversion of pyruvate to acetyl-CoA and CO(2). It contains multiple copies of three enzymatic components: pyruvate dehydrogenase (E1), dihydrolipoamide acetyltransferase (E2) and lipoamide dehydrogenase (E3). Functionally, the B.subtilis PDH complex also possesses branched-chain 2-oxoacid dehydrogenase (BCDH) activity. The polypeptide is Pyruvate dehydrogenase E1 component subunit alpha (Bacillus subtilis (strain 168)).